The sequence spans 146 residues: Globin-1 (146 aa).

One can recognise a Globin domain in the interval 9–146 (QLTADVKKDL…KLVAVVQAAL (138 aa)). H101 contributes to the heme b binding site.

The protein belongs to the globin family. As to quaternary structure, homodimer.

The protein localises to the cytoplasm. This Anadara broughtonii (Blood clam) protein is Globin-1.